The following is an 87-amino-acid chain: Defensin-like protein 175 (87 aa).

The N-terminal stretch at 1–23 is a signal peptide; sequence MAKATSSLVVPIIFLVIFALVEQ. Disulfide bonds link Cys-27–Cys-66, Cys-36–Cys-55, Cys-39–Cys-60, and Cys-43–Cys-62.

This sequence belongs to the DEFL family.

It localises to the secreted. This chain is Defensin-like protein 175, found in Arabidopsis thaliana (Mouse-ear cress).